Here is an 868-residue protein sequence, read N- to C-terminus: MHEQYTPRDIEAAAQHFWDEQQSFAVTEQPGKDTYYCLSMFPYPSGKLHMGHVRNYTIGDVIARYQRMLGKNVLQPMGWDAFGMPAENAAMKNNVAPAKWTYENIDYMKTQLKSLGLAIDWAREVTTCKPDYYRWEQWLFTRLFEKGIIYRKNGTVNWDPADQTVLANEQVIDGRGWRSGALIEKREIPMYYFRITDYADELLESLDELPGWPEQVKTMQRNWIGKSRGMEVQFPYDQASIGHEGTLKVFTTRPDTLMGATYVAVAAEHPLATQAAQGNPALQAFIDECKSGSVAEADMATQEKKGMPTSLLVEHPLTGEKLPVWVANYVLMHYGDGAVMAVPAHDERDFEFAHKYNLPVKAVVRTSAGDEVGSEWQAAYGEHGQLINSGEFDGLDFAGAFDAIEAALIRKELGKSRTQFRLRDWGISRQRYWGCPIPIIHCPSCGDVPVPEDQLPVTLPENVVPDGAGSPLARMPEFYECSCPKCGAAAKRETDTMDTFVESSWYFARYASPNYDKGLVDPKAANHWLPVDQYIGGIEHAILHLLYARFFHKLMRDEGLVTSNEPFKNLLTQGMVVAETYYRVASNGGKDWFNPADVEIERDAKAKIIGARLKTDGLPVEIGGTEKMSKSKNNGVDPQSMIEAYGADTCRLFMMFASPPDMSLEWSDSGVEGASRFLRRVWRLAQGHVNQGLPGKLDLAALNDEQKVIRRAIHTAIKQASTDVGQYHKFNTAIAQVMTVMNVLEKAPQSTEQDRALLQEGLEAVTLLLAPITPHISHELWKALGHEQAVIDACWPVVDESALVQDTVTLVVQVNGKLRGQVEMPAAASREEIEAAARNNENVLRFIDGLTIRKVIVVPGKLVNIVAN.

The short motif at proline 42–histidine 52 is the 'HIGH' region element. The 'KMSKS' region motif lies at lysine 627–serine 631. Lysine 630 is a binding site for ATP.

The protein belongs to the class-I aminoacyl-tRNA synthetase family.

Its subcellular location is the cytoplasm. The enzyme catalyses tRNA(Leu) + L-leucine + ATP = L-leucyl-tRNA(Leu) + AMP + diphosphate. The chain is Leucine--tRNA ligase from Pseudomonas putida (strain W619).